Here is a 173-residue protein sequence, read N- to C-terminus: Ribosome maturation factor RimM (173 aa).

The 73-residue stretch at 98 to 170 folds into the PRC barrel domain; that stretch reads EDEYYWCDLL…RMTVSLPEGL (73 aa).

The protein belongs to the RimM family. Binds ribosomal protein uS19.

The protein localises to the cytoplasm. Its function is as follows. An accessory protein needed during the final step in the assembly of 30S ribosomal subunit, possibly for assembly of the head region. Essential for efficient processing of 16S rRNA. May be needed both before and after RbfA during the maturation of 16S rRNA. It has affinity for free ribosomal 30S subunits but not for 70S ribosomes. This chain is Ribosome maturation factor RimM, found in Geotalea uraniireducens (strain Rf4) (Geobacter uraniireducens).